A 417-amino-acid chain; its full sequence is UDP-N-acetylglucosamine 1-carboxyvinyltransferase (417 aa).

22-23 (KN) lines the phosphoenolpyruvate pocket. A UDP-N-acetyl-alpha-D-glucosamine-binding site is contributed by arginine 92. Cysteine 116 (proton donor) is an active-site residue. Position 116 is a 2-(S-cysteinyl)pyruvic acid O-phosphothioketal (cysteine 116). UDP-N-acetyl-alpha-D-glucosamine contacts are provided by aspartate 304 and isoleucine 326.

This sequence belongs to the EPSP synthase family. MurA subfamily.

Its subcellular location is the cytoplasm. The catalysed reaction is phosphoenolpyruvate + UDP-N-acetyl-alpha-D-glucosamine = UDP-N-acetyl-3-O-(1-carboxyvinyl)-alpha-D-glucosamine + phosphate. It participates in cell wall biogenesis; peptidoglycan biosynthesis. In terms of biological role, cell wall formation. Adds enolpyruvyl to UDP-N-acetylglucosamine. This is UDP-N-acetylglucosamine 1-carboxyvinyltransferase from Desulfosudis oleivorans (strain DSM 6200 / JCM 39069 / Hxd3) (Desulfococcus oleovorans).